Here is a 431-residue protein sequence, read N- to C-terminus: Adenylosuccinate synthetase 2 (431 aa).

Residues 13–19 and 41–43 each bind GTP; these read GDEGKGK and GHT. The active-site Proton acceptor is the Asp-14. Asp-14 and Gly-41 together coordinate Mg(2+). Residues 14–17, 39–42, Thr-130, Arg-144, Gln-225, Thr-240, and Arg-304 contribute to the IMP site; these read DEGK and NAGH. His-42 (proton donor) is an active-site residue. 300–306 provides a ligand contact to substrate; that stretch reads SVTGRPR. Residues Arg-306, 332–334, and 414–416 contribute to the GTP site; these read KLD and STG.

This sequence belongs to the adenylosuccinate synthetase family. Homodimer. It depends on Mg(2+) as a cofactor.

It is found in the cytoplasm. It carries out the reaction IMP + L-aspartate + GTP = N(6)-(1,2-dicarboxyethyl)-AMP + GDP + phosphate + 2 H(+). Its pathway is purine metabolism; AMP biosynthesis via de novo pathway; AMP from IMP: step 1/2. Plays an important role in the de novo pathway of purine nucleotide biosynthesis. Catalyzes the first committed step in the biosynthesis of AMP from IMP. In Chromobacterium violaceum (strain ATCC 12472 / DSM 30191 / JCM 1249 / CCUG 213 / NBRC 12614 / NCIMB 9131 / NCTC 9757 / MK), this protein is Adenylosuccinate synthetase 2.